A 371-amino-acid chain; its full sequence is 4-hydroxy-3-methylbut-2-en-1-yl diphosphate synthase (flavodoxin) (371 aa).

C269, C272, C304, and E311 together coordinate [4Fe-4S] cluster.

The protein belongs to the IspG family. The cofactor is [4Fe-4S] cluster.

It carries out the reaction (2E)-4-hydroxy-3-methylbut-2-enyl diphosphate + oxidized [flavodoxin] + H2O + 2 H(+) = 2-C-methyl-D-erythritol 2,4-cyclic diphosphate + reduced [flavodoxin]. Its pathway is isoprenoid biosynthesis; isopentenyl diphosphate biosynthesis via DXP pathway; isopentenyl diphosphate from 1-deoxy-D-xylulose 5-phosphate: step 5/6. Converts 2C-methyl-D-erythritol 2,4-cyclodiphosphate (ME-2,4cPP) into 1-hydroxy-2-methyl-2-(E)-butenyl 4-diphosphate. The chain is 4-hydroxy-3-methylbut-2-en-1-yl diphosphate synthase (flavodoxin) from Acinetobacter baylyi (strain ATCC 33305 / BD413 / ADP1).